The primary structure comprises 316 residues: tRNA selenocysteine 1-associated protein 1-like (316 aa).

RRM domains lie at 6–89 and 99–178; these read TSLW…YATY and FSVF…IAVN. Over residues 239 to 248 the composition is skewed to pro residues; the sequence is PPMGMPPMPP. A disordered region spans residues 239–285; the sequence is PPMGMPPMPPDMQGSTEAHDGTEEVEEDPSEDPNPQVDVEELNRQYM.

The protein belongs to the RRM TRSPAP family.

The protein resides in the nucleus. Its subcellular location is the cytoplasm. Involved in the early steps of selenocysteine biosynthesis and tRNA(Sec) charging to the later steps resulting in the cotranslational incorporation of selenocysteine into selenoproteins. In Danio rerio (Zebrafish), this protein is tRNA selenocysteine 1-associated protein 1-like (trnau1apl).